The following is a 562-amino-acid chain: Oxygen-dependent choline dehydrogenase (562 aa).

4–33 is a binding site for FAD; that stretch reads DYIIIGAGSAGNVLATRLTEDPNTTVLLLE. The Proton acceptor role is filled by His473.

Belongs to the GMC oxidoreductase family. It depends on FAD as a cofactor.

The enzyme catalyses choline + A = betaine aldehyde + AH2. It carries out the reaction betaine aldehyde + NAD(+) + H2O = glycine betaine + NADH + 2 H(+). Its pathway is amine and polyamine biosynthesis; betaine biosynthesis via choline pathway; betaine aldehyde from choline (cytochrome c reductase route): step 1/1. Its function is as follows. Involved in the biosynthesis of the osmoprotectant glycine betaine. Catalyzes the oxidation of choline to betaine aldehyde and betaine aldehyde to glycine betaine at the same rate. The sequence is that of Oxygen-dependent choline dehydrogenase from Escherichia coli (strain SMS-3-5 / SECEC).